An 841-amino-acid chain; its full sequence is Alpha-glucan phosphorylase 2, cytosolic (841 aa).

The segment at 1 to 24 (MANANGKAATSLPEKISAKANPEA) is disordered. Lysine 687 is modified (N6-(pyridoxal phosphate)lysine).

Belongs to the glycogen phosphorylase family. Pyridoxal 5'-phosphate is required as a cofactor.

It localises to the cytoplasm. It catalyses the reaction [(1-&gt;4)-alpha-D-glucosyl](n) + phosphate = [(1-&gt;4)-alpha-D-glucosyl](n-1) + alpha-D-glucose 1-phosphate. In terms of biological role, phosphorylase is an important allosteric enzyme in carbohydrate metabolism. Enzymes from different sources differ in their regulatory mechanisms and in their natural substrates. However, all known phosphorylases share catalytic and structural properties. This Arabidopsis thaliana (Mouse-ear cress) protein is Alpha-glucan phosphorylase 2, cytosolic (PHS2).